We begin with the raw amino-acid sequence, 192 residues long: UPF0312 protein PputGB1_5030 (192 aa).

Residues 1–23 form the signal peptide; it reads MLKKTFAALALGTALLSAGQAMA.

This sequence belongs to the UPF0312 family. Type 1 subfamily.

It localises to the periplasm. The chain is UPF0312 protein PputGB1_5030 from Pseudomonas putida (strain GB-1).